Here is a 129-residue protein sequence, read N- to C-terminus: Cortical cell-delineating protein (129 aa).

The or 21 signal peptide spans 1–19 (MAPKVALFLALSLLFAATA). N25 carries N-linked (GlcNAc...) asparagine glycosylation. A run of 2 repeats spans residues 29 to 34 (PVVPTP) and 35 to 40 (PVVPTP). The 2 X 6 AA tandem repeats of P-V-V-P-T-P stretch occupies residues 29-40 (PVVPTPPVVPTP).

To carrot DC2.15 and PEMB3. In terms of tissue distribution, cortical ground meristem of developing roots.

Functionally, delineates a novel subset of developing cortical cells. It is probably involved in some aspect of transport of molecules to or from the vasculature. The protein is Cortical cell-delineating protein of Zea mays (Maize).